Here is a 73-residue protein sequence, read N- to C-terminus: Gas vesicle protein A (73 aa).

It belongs to the gas vesicle GvpA family. In terms of assembly, the gas vesicle shell is 2 nm thick and consists of a single layer of this protein. It forms helical ribs nearly perpendicular to the long axis of the vesicle.

The protein resides in the gas vesicle shell. Gas vesicles are hollow, gas filled proteinaceous nanostructures found in some microorganisms. During planktonic growth they allow positioning of the organism at a favorable depth for light or nutrient acquisition. GvpA forms the protein shell. In Nostoc punctiforme (strain ATCC 29133 / PCC 73102), this protein is Gas vesicle protein A.